Consider the following 360-residue polypeptide: G-protein coupled receptor 15 (360 aa).

The Extracellular segment spans residues 1–33; sequence MDPEETSVYLDYYYATSPNPDIRETHSHVPYTS. A helical transmembrane segment spans residues 34–54; sequence VFLPVFYIAVFLTGVLGNLVL. Residues 55–69 are Cytoplasmic-facing; the sequence is MGALHFKPGSRRLID. A helical transmembrane segment spans residues 70 to 90; sequence IFIINLAASDFIFLVTLPLWV. The Extracellular segment spans residues 91–120; it reads DKEASLGLWRTGSFLCKGSSYMISVNMHCS. The helical transmembrane segment at 121 to 141 threads the bilayer; sequence VFLLTCMSVDRYLAIVCPVVS. At 142-149 the chain is on the cytoplasmic side; sequence RKFRRTDC. The helical transmembrane segment at 150 to 170 threads the bilayer; sequence AYVVCASIWFISCLLGLPTLL. Residues 171–192 lie on the Extracellular side of the membrane; that stretch reads SRELTLIDDKPYCAEKKATPLK. The chain crosses the membrane as a helical span at residues 193–213; the sequence is LIWSLVALIFTFFVPLLSIVT. Residues 214–239 lie on the Cytoplasmic side of the membrane; it reads CYCRIARKLCAHYQQSGKHNKKLKKS. The chain crosses the membrane as a helical span at residues 240–260; the sequence is IKIIFIVVAAFLVSWLPFNTS. Residues 261-284 are Extracellular-facing; that stretch reads KLLAIVSGLQQERYFPSAILQLGM. The chain crosses the membrane as a helical span at residues 285 to 305; that stretch reads EVSGPLAFANSCVNPFIYYIF. Topologically, residues 306–360 are cytoplasmic; that stretch reads DSYIRRAIVHCLCPCLKNYDFGSSTETSDSHLTKALSTFIHAEDFTRRRKRSVSL. Ser-359 carries the post-translational modification Phosphoserine.

The protein belongs to the G-protein coupled receptor 1 family. In terms of assembly, interacts with adapter YWHAE; this interaction promotes ER-to-Golgi transport of GPR15. In terms of processing, phosphorylation is necessary for YWHAE binding and efficient surface expression. O-glycosylated. Sialylated O-glycans in the N-terminal tail inhibits binding of GPR15LG. Post-translationally, sulfation is required for efficient binding of GPR15LG.

The protein resides in the cell membrane. In terms of biological role, g protein-coupled receptor that plays an important role in immune homeostasis. Acts via its natural ligand GPR15LG, a chemokine-like polypeptide strongly expressed in gastrointestinal tissues. GPR15-GPR15LG signaling axis regulates intestinal homeostasis and inflammation through the migration of immune cells. Controls thereby the specific homing of T-cells, particularly FOXP3+ regulatory T-cells (Tregs), to the large intestine lamina propria. Also required for skin localization of thymus-derived dendritic epidermal T-cells. Plays an important role in mediating cytoprotective function as well as angiogenesis of thrombomodulin. Mechanistically, preferentially signals through the Gi/o pathway to inhibit adenylate cyclase activity and activate a phosphatidylinositol-calcium second messenger system that regulates the release of Ca(2+) ions from intracellular stores. This Chlorocebus aethiops (Green monkey) protein is G-protein coupled receptor 15 (GPR15).